The sequence spans 124 residues: Glycine cleavage system H protein (124 aa).

In terms of domain architecture, Lipoyl-binding spans 24–106 (TYTMGITDHA…YDDGWLVKFK (83 aa)). At K65 the chain carries N6-lipoyllysine.

Belongs to the GcvH family. In terms of assembly, the glycine cleavage system is composed of four proteins: P, T, L and H. (R)-lipoate is required as a cofactor.

The glycine cleavage system catalyzes the degradation of glycine. The H protein shuttles the methylamine group of glycine from the P protein to the T protein. In Ruthia magnifica subsp. Calyptogena magnifica, this protein is Glycine cleavage system H protein.